Here is a 126-residue protein sequence, read N- to C-terminus: Putative regulator AldR (126 aa).

This sequence belongs to the RutC family.

Its function is as follows. Implicated in the regulation of isoleucine biosynthesis. The sequence is that of Putative regulator AldR (aldR) from Lactococcus lactis subsp. lactis (strain IL1403) (Streptococcus lactis).